We begin with the raw amino-acid sequence, 215 residues long: Myelin protein zero-like protein 2 (215 aa).

Positions 1–26 (MYGKSPALVLPLLLSLQLTALCPTEA) are cleaved as a signal peptide. The 115-residue stretch at 27 to 141 (VEIYTSGALE…DGLVGTIRLS (115 aa)) folds into the Ig-like V-type domain. Residues 27–154 (VEIYTSGALE…TVPFSEIYFL (128 aa)) lie on the Extracellular side of the membrane. N-linked (GlcNAc...) asparagine glycosylation is found at N39 and N118. An intrachain disulfide couples C47 to C123. A helical membrane pass occupies residues 155-175 (AVAIGSACALMIIVVIVVVLF). At 176-215 (QHFRKKRWADRADKAEGTKSKEEEKLNQGNKVSVFVEDTD) the chain is on the cytoplasmic side. The segment covering 187–201 (ADKAEGTKSKEEEKL) has biased composition (basic and acidic residues). The interval 187–215 (ADKAEGTKSKEEEKLNQGNKVSVFVEDTD) is disordered.

Belongs to the myelin P0 protein family. Widely expressed. Expressed in the cochlea, in Deiters' cells, possibly at contact sites with the basilar membrane. Expressed in both outer and inner auditory hair cells. In the stria vascularis, detected in the basal cell layer. Not detected in thymocytes, lymphocytes, macrophage or dendritic cells.

It is found in the membrane. In terms of biological role, mediates homophilic cell-cell adhesion. The protein is Myelin protein zero-like protein 2 (Mpzl2) of Mus musculus (Mouse).